The following is a 708-amino-acid chain: tRNA 5-methylaminomethyl-2-thiouridine biosynthesis bifunctional protein MnmC (708 aa).

The tRNA (mnm(5)s(2)U34)-methyltransferase stretch occupies residues 1–278; sequence MTAEPNKPCQ…ERQVLRQQDA (278 aa). An FAD-dependent cmnm(5)s(2)U34 oxidoreductase region spans residues 301–708; sequence IGGGLASAHL…LRKLLKGKAL (408 aa).

This sequence in the N-terminal section; belongs to the methyltransferase superfamily. tRNA (mnm(5)s(2)U34)-methyltransferase family. In the C-terminal section; belongs to the DAO family. The cofactor is FAD.

It is found in the cytoplasm. It catalyses the reaction 5-aminomethyl-2-thiouridine(34) in tRNA + S-adenosyl-L-methionine = 5-methylaminomethyl-2-thiouridine(34) in tRNA + S-adenosyl-L-homocysteine + H(+). Its function is as follows. Catalyzes the last two steps in the biosynthesis of 5-methylaminomethyl-2-thiouridine (mnm(5)s(2)U) at the wobble position (U34) in tRNA. Catalyzes the FAD-dependent demodification of cmnm(5)s(2)U34 to nm(5)s(2)U34, followed by the transfer of a methyl group from S-adenosyl-L-methionine to nm(5)s(2)U34, to form mnm(5)s(2)U34. In Shewanella baltica (strain OS195), this protein is tRNA 5-methylaminomethyl-2-thiouridine biosynthesis bifunctional protein MnmC.